Consider the following 481-residue polypeptide: MGQGVIGMSGRTLLDKIWERHVVRREPGKPDLLYIDLHLVHEVTSPQAFEGLRMAGRRVRRPDLTIATMDHNVPTTDRSLPLTDEIAARQMAALERNCSEFGVRLFDLYSPFQGIVHVIGPELGLTQPGLTIVCGDSHTATHGAFGALAFGIGTSEVEHVLATQCLWQHKPKVMEIRVNGKLPPGTTAKDLILGIIGQIGTDGATGYVIEYTGEAIRSLSMEGRMTVCNMSIEAGARAGMIAPDETTFAYLKGRPHAPQGELWEAAVADWRTLASDPDAVYDRVVEFDAGQLAPVVSWGTNPGQVVPVTGRIPDPRDFADPAQRKAAEAALAYMDLEPGTPIQDIRIDRVFIGSCTNGRIEDLRAAAAVVKGRKVAPGVRAMVVPGSGQVKAQAEAEGLDQIFREAGFEWREAGCSMCLGMNPDILAPGERCASTSNRNFEGRQGKGGRTHLVSPAMAAAAAIAGHFVDVRELLAEGGAAR.

The [4Fe-4S] cluster site is built by Cys-355, Cys-415, and Cys-418.

Belongs to the aconitase/IPM isomerase family. LeuC type 1 subfamily. Heterodimer of LeuC and LeuD. The cofactor is [4Fe-4S] cluster.

The catalysed reaction is (2R,3S)-3-isopropylmalate = (2S)-2-isopropylmalate. It participates in amino-acid biosynthesis; L-leucine biosynthesis; L-leucine from 3-methyl-2-oxobutanoate: step 2/4. Catalyzes the isomerization between 2-isopropylmalate and 3-isopropylmalate, via the formation of 2-isopropylmaleate. The polypeptide is 3-isopropylmalate dehydratase large subunit (Symbiobacterium thermophilum (strain DSM 24528 / JCM 14929 / IAM 14863 / T)).